The primary structure comprises 298 residues: 4-hydroxy-tetrahydrodipicolinate synthase (298 aa).

Thr-51 contacts pyruvate. Tyr-140 functions as the Proton donor/acceptor in the catalytic mechanism. Lys-168 functions as the Schiff-base intermediate with substrate in the catalytic mechanism. Ile-210 provides a ligand contact to pyruvate.

The protein belongs to the DapA family. As to quaternary structure, homotetramer; dimer of dimers.

It localises to the cytoplasm. The enzyme catalyses L-aspartate 4-semialdehyde + pyruvate = (2S,4S)-4-hydroxy-2,3,4,5-tetrahydrodipicolinate + H2O + H(+). It functions in the pathway amino-acid biosynthesis; L-lysine biosynthesis via DAP pathway; (S)-tetrahydrodipicolinate from L-aspartate: step 3/4. Catalyzes the condensation of (S)-aspartate-beta-semialdehyde [(S)-ASA] and pyruvate to 4-hydroxy-tetrahydrodipicolinate (HTPA). The chain is 4-hydroxy-tetrahydrodipicolinate synthase from Acidovorax sp. (strain JS42).